Here is a 305-residue protein sequence, read N- to C-terminus: Tyrosine recombinase XerC (305 aa).

The Core-binding (CB) domain occupies Thr-4–Glu-95. A Tyr recombinase domain is found at Leu-116–Val-298. Residues Arg-159, Lys-182, His-250, Arg-253, and His-276 contribute to the active site. Residue Tyr-285 is the O-(3'-phospho-DNA)-tyrosine intermediate of the active site.

The protein belongs to the 'phage' integrase family. XerC subfamily. In terms of assembly, forms a cyclic heterotetrameric complex composed of two molecules of XerC and two molecules of XerD.

It is found in the cytoplasm. In terms of biological role, site-specific tyrosine recombinase, which acts by catalyzing the cutting and rejoining of the recombining DNA molecules. The XerC-XerD complex is essential to convert dimers of the bacterial chromosome into monomers to permit their segregation at cell division. It also contributes to the segregational stability of plasmids. This chain is Tyrosine recombinase XerC, found in Rickettsia bellii (strain OSU 85-389).